We begin with the raw amino-acid sequence, 197 residues long: ATP-dependent Clp protease proteolytic subunit 1 (197 aa).

Ser-99 serves as the catalytic Nucleophile. His-124 is an active-site residue.

It belongs to the peptidase S14 family. As to quaternary structure, fourteen ClpP subunits assemble into 2 heptameric rings which stack back to back to give a disk-like structure with a central cavity, resembling the structure of eukaryotic proteasomes.

The protein localises to the cytoplasm. The catalysed reaction is Hydrolysis of proteins to small peptides in the presence of ATP and magnesium. alpha-casein is the usual test substrate. In the absence of ATP, only oligopeptides shorter than five residues are hydrolyzed (such as succinyl-Leu-Tyr-|-NHMec, and Leu-Tyr-Leu-|-Tyr-Trp, in which cleavage of the -Tyr-|-Leu- and -Tyr-|-Trp bonds also occurs).. Cleaves peptides in various proteins in a process that requires ATP hydrolysis. Has a chymotrypsin-like activity. Plays a major role in the degradation of misfolded proteins. In Treponema denticola (strain ATCC 35405 / DSM 14222 / CIP 103919 / JCM 8153 / KCTC 15104), this protein is ATP-dependent Clp protease proteolytic subunit 1.